A 455-amino-acid chain; its full sequence is Ribulose bisphosphate carboxylase large chain (455 aa).

At Lys5 the chain carries N6,N6,N6-trimethyllysine. Residues Asn114 and Thr164 each contribute to the substrate site. Lys166 serves as the catalytic Proton acceptor. Residue Lys168 participates in substrate binding. Lys192, Asp194, and Glu195 together coordinate Mg(2+). Lys192 carries the post-translational modification N6-carboxylysine. His285 (proton acceptor) is an active-site residue. Residues Arg286, His318, and Ser370 each coordinate substrate.

It belongs to the RuBisCO large chain family. Type I subfamily. In terms of assembly, heterohexadecamer of 8 large chains and 8 small chains; disulfide-linked. The disulfide link is formed within the large subunit homodimers. It depends on Mg(2+) as a cofactor. In terms of processing, the disulfide bond which can form in the large chain dimeric partners within the hexadecamer appears to be associated with oxidative stress and protein turnover.

The protein localises to the plastid. The protein resides in the chloroplast. It carries out the reaction 2 (2R)-3-phosphoglycerate + 2 H(+) = D-ribulose 1,5-bisphosphate + CO2 + H2O. It catalyses the reaction D-ribulose 1,5-bisphosphate + O2 = 2-phosphoglycolate + (2R)-3-phosphoglycerate + 2 H(+). Functionally, ruBisCO catalyzes two reactions: the carboxylation of D-ribulose 1,5-bisphosphate, the primary event in carbon dioxide fixation, as well as the oxidative fragmentation of the pentose substrate in the photorespiration process. Both reactions occur simultaneously and in competition at the same active site. The sequence is that of Ribulose bisphosphate carboxylase large chain from Lupinus paraguariensis (Lupine).